Reading from the N-terminus, the 1416-residue chain is DNA-directed RNA polymerase subunit beta' (1416 aa).

Residues Cys71, Cys73, Cys86, and Cys89 each coordinate Zn(2+). Mg(2+) contacts are provided by Asp461, Asp463, and Asp465. Zn(2+)-binding residues include Cys815, Cys892, Cys899, and Cys902.

The protein belongs to the RNA polymerase beta' chain family. As to quaternary structure, the RNAP catalytic core consists of 2 alpha, 1 beta, 1 beta' and 1 omega subunit. When a sigma factor is associated with the core the holoenzyme is formed, which can initiate transcription. Mg(2+) is required as a cofactor. Requires Zn(2+) as cofactor.

It catalyses the reaction RNA(n) + a ribonucleoside 5'-triphosphate = RNA(n+1) + diphosphate. Functionally, DNA-dependent RNA polymerase catalyzes the transcription of DNA into RNA using the four ribonucleoside triphosphates as substrates. This Blochmanniella pennsylvanica (strain BPEN) protein is DNA-directed RNA polymerase subunit beta'.